The primary structure comprises 520 residues: GMP synthase [glutamine-hydrolyzing] (520 aa).

In terms of domain architecture, Glutamine amidotransferase type-1 spans 4-202; that stretch reads KILILDFGSQ…VHDICGCGSD (199 aa). Cys81 serves as the catalytic Nucleophile. Active-site residues include His176 and Glu178. One can recognise a GMPS ATP-PPase domain in the interval 203-395; that stretch reads WNMPDYVEEA…LGLPHDMVYR (193 aa). 230–236 serves as a coordination point for ATP; it reads SGGVDSS.

In terms of assembly, homodimer.

It carries out the reaction XMP + L-glutamine + ATP + H2O = GMP + L-glutamate + AMP + diphosphate + 2 H(+). It participates in purine metabolism; GMP biosynthesis; GMP from XMP (L-Gln route): step 1/1. Catalyzes the synthesis of GMP from XMP. The sequence is that of GMP synthase [glutamine-hydrolyzing] from Thiobacillus denitrificans (strain ATCC 25259 / T1).